We begin with the raw amino-acid sequence, 179 residues long: Large ribosomal subunit protein uL5 (179 aa).

It belongs to the universal ribosomal protein uL5 family. Part of the 50S ribosomal subunit; part of the 5S rRNA/L5/L18/L25 subcomplex. Contacts the 5S rRNA and the P site tRNA. Forms a bridge to the 30S subunit in the 70S ribosome.

In terms of biological role, this is one of the proteins that bind and probably mediate the attachment of the 5S RNA into the large ribosomal subunit, where it forms part of the central protuberance. In the 70S ribosome it contacts protein S13 of the 30S subunit (bridge B1b), connecting the 2 subunits; this bridge is implicated in subunit movement. Contacts the P site tRNA; the 5S rRNA and some of its associated proteins might help stabilize positioning of ribosome-bound tRNAs. This is Large ribosomal subunit protein uL5 from Prochlorococcus marinus (strain MIT 9312).